The primary structure comprises 379 residues: UDP-N-acetylglucosamine--N-acetylmuramyl-(pentapeptide) pyrophosphoryl-undecaprenol N-acetylglucosamine transferase (379 aa).

UDP-N-acetyl-alpha-D-glucosamine is bound by residues 17–19 (TGG), asparagine 128, arginine 169, serine 197, and glutamine 298.

This sequence belongs to the glycosyltransferase 28 family. MurG subfamily.

The protein localises to the cell inner membrane. It catalyses the reaction di-trans,octa-cis-undecaprenyl diphospho-N-acetyl-alpha-D-muramoyl-L-alanyl-D-glutamyl-meso-2,6-diaminopimeloyl-D-alanyl-D-alanine + UDP-N-acetyl-alpha-D-glucosamine = di-trans,octa-cis-undecaprenyl diphospho-[N-acetyl-alpha-D-glucosaminyl-(1-&gt;4)]-N-acetyl-alpha-D-muramoyl-L-alanyl-D-glutamyl-meso-2,6-diaminopimeloyl-D-alanyl-D-alanine + UDP + H(+). It functions in the pathway cell wall biogenesis; peptidoglycan biosynthesis. Functionally, cell wall formation. Catalyzes the transfer of a GlcNAc subunit on undecaprenyl-pyrophosphoryl-MurNAc-pentapeptide (lipid intermediate I) to form undecaprenyl-pyrophosphoryl-MurNAc-(pentapeptide)GlcNAc (lipid intermediate II). The protein is UDP-N-acetylglucosamine--N-acetylmuramyl-(pentapeptide) pyrophosphoryl-undecaprenol N-acetylglucosamine transferase of Brucella suis biovar 1 (strain 1330).